The sequence spans 78 residues: MSRVCQVTGKRPAVGNNRSHAMNATKRRFLPNLHTHRFWVESEKRFVTLRLTAKGMRIIDKKGIDAVLADIRARGEKI.

This sequence belongs to the bacterial ribosomal protein bL28 family.

The protein is Large ribosomal subunit protein bL28 of Pasteurella multocida (strain Pm70).